A 266-amino-acid chain; its full sequence is MKKMSEIIATLKKDYIYNLMIKDKRQDGRGFKDFRELKLETNVISKAEGSAKVTLGNTQVLVGVKLQTGTPFPDSQDEGVIITNLELNPIASPEFEPGPPREDAIEMARVVDRGIRESGAIDIKKLCITVGESVWIVFIDVHILNNDGNIIDASCLAAIAALMTTMVPNEQQGLGENVPLAMKEMPVGITLAKIGSKLMVDPSLDEEAVCETKLTIVSSSDGSVAGMQKMGPVPLTEAELFEAIDMAIEKAAEIRGLYLEGLAKSE.

The protein belongs to the RNase PH family. Rrp42 subfamily. As to quaternary structure, component of the archaeal exosome complex. Forms a hexameric ring-like arrangement composed of 3 Rrp41-Rrp42 heterodimers. The hexameric ring associates with a trimer of Rrp4 and/or Csl4 subunits.

The protein localises to the cytoplasm. Its function is as follows. Non-catalytic component of the exosome, which is a complex involved in RNA degradation. Contributes to the structuring of the Rrp41 active site. The polypeptide is Exosome complex component Rrp42 (Methanosarcina mazei (strain ATCC BAA-159 / DSM 3647 / Goe1 / Go1 / JCM 11833 / OCM 88) (Methanosarcina frisia)).